Consider the following 313-residue polypeptide: Homeobox protein knotted-1-like 2 (313 aa).

Positions 13-40 (DPSSAAASSPNPSFSPGGGGGGGVGGGE) are disordered. Low complexity predominate over residues 14–27 (PSSAAASSPNPSFS). The segment covering 28 to 38 (PGGGGGGGVGG) has biased composition (gly residues). The 21-residue stretch at 205-225 (ELKNELKQGYKEKLVDIREEI) folds into the ELK domain. A DNA-binding region (homeobox; TALE-type) is located at residues 226–289 (LRKRRAGKLP…NQRKRNWHSN (64 aa)). The segment at 282 to 313 (RKRNWHSNPASSGEKTKKKRNVTGDGGAEQSW) is disordered.

It belongs to the TALE/KNOX homeobox family. As to expression, isoform 1 is expressed in roots, leaf blades, leaf sheaths and flowers. Isoform 2 is expressed in leaf blades, leaf sheaths and flowers.

It localises to the nucleus. This is Homeobox protein knotted-1-like 2 (HOS58) from Oryza sativa subsp. japonica (Rice).